The following is a 30-amino-acid chain: Snake venom serine protease (30 aa).

In terms of domain architecture, Peptidase S1 spans 1 to 30 (VIGGDECNINEHRFLVALYDPDGFLSGGIL).

This sequence belongs to the peptidase S1 family. Snake venom subfamily. Monomer. In terms of processing, N-Glycosylated. As to expression, expressed by the venom gland.

The protein resides in the secreted. Inhibited by diisopropylfluorophosphate (DFP). In terms of biological role, snake venom serine protease that catalyzes the hydrolysis of arginine esters, kallikrein substrates Pro-Phe-Arg-MCA and Z-Phe-Arg-MCA. Cleaves kininogen analogs to release bradykinin. Induces contraction of the isolated rat uterus directly at high concentrations, but provokes more forceful contractions when injected in presence of bovine plasma. Shows capillary permeability-increasing activity and hypotensive activity on the anesthetized rat. The chain is Snake venom serine protease from Crotalus viridis viridis (Prairie rattlesnake).